Consider the following 449-residue polypeptide: Cortexillin-2 (449 aa).

Residues 1–231 are actin-binding; that stretch reads MTDLHKEWEK…ILYTSLFFHA (231 aa). 2 Calponin-homology (CH) domains span residues 10-119 and 128-233; these read KVQE…RKYR and KSSE…HAYR. Coiled-coil stretches lie at residues 232–364 and 408–441; these read YRAK…AEGL and QFEEQAKRLGSKVENENISLEKYLSLKEEELKSA.

Belongs to the cortexillin family. As to quaternary structure, homodimer; parallel.

It is found in the cytoplasm. It localises to the cytoskeleton. Functionally, actin-bundling protein. When linked to F-actin the actin filaments form preferentially anti-parallel bundles that associate into meshworks. Plays a major role in cytokinesis. This Heterostelium pallidum (strain ATCC 26659 / Pp 5 / PN500) (Cellular slime mold) protein is Cortexillin-2 (ctxB).